A 269-amino-acid polypeptide reads, in one-letter code: Formamidopyrimidine-DNA glycosylase (269 aa).

The active-site Schiff-base intermediate with DNA is the Pro-2. The active-site Proton donor is Glu-3. Lys-57 acts as the Proton donor; for beta-elimination activity in catalysis. DNA contacts are provided by His-90, Arg-109, and Lys-150. The FPG-type zinc finger occupies 235 to 269 (FVYGRAGEPCRICGEQIESIKLGQRSTFFCRHCQY). The Proton donor; for delta-elimination activity role is filled by Arg-259.

This sequence belongs to the FPG family. In terms of assembly, monomer. It depends on Zn(2+) as a cofactor.

It catalyses the reaction Hydrolysis of DNA containing ring-opened 7-methylguanine residues, releasing 2,6-diamino-4-hydroxy-5-(N-methyl)formamidopyrimidine.. The catalysed reaction is 2'-deoxyribonucleotide-(2'-deoxyribose 5'-phosphate)-2'-deoxyribonucleotide-DNA = a 3'-end 2'-deoxyribonucleotide-(2,3-dehydro-2,3-deoxyribose 5'-phosphate)-DNA + a 5'-end 5'-phospho-2'-deoxyribonucleoside-DNA + H(+). Its function is as follows. Involved in base excision repair of DNA damaged by oxidation or by mutagenic agents. Acts as a DNA glycosylase that recognizes and removes damaged bases. Has a preference for oxidized purines, such as 7,8-dihydro-8-oxoguanine (8-oxoG). Has AP (apurinic/apyrimidinic) lyase activity and introduces nicks in the DNA strand. Cleaves the DNA backbone by beta-delta elimination to generate a single-strand break at the site of the removed base with both 3'- and 5'-phosphates. The sequence is that of Formamidopyrimidine-DNA glycosylase from Photorhabdus laumondii subsp. laumondii (strain DSM 15139 / CIP 105565 / TT01) (Photorhabdus luminescens subsp. laumondii).